The primary structure comprises 740 residues: NAD(P)H-quinone oxidoreductase subunit 5, chloroplastic (740 aa).

17 helical membrane-spanning segments follow: residues 9–29, 40–60, 89–109, 125–145, 147–167, 185–205, 219–239, 258–278, 290–310, 327–347, 354–374, 396–416, 425–445, 521–538, 545–565, 599–619, and 720–740; these read WIIPFIPLPVTVLVGLGLLVV, WAFISVLLLSIALLFSINISI, IDSLTSIMLILITTVGIMVLI, FAYLNFFNASMLGLVTSSNLI, IYIFWELVGMCSYLLIGFWFT, GDFGLLLGILGLYWITGSFEF, NTINLFFAALCASLLFLGAIA, TPISALIHAATMVAAGIFLVA, IMYFISLIGIITVLLGATLAL, LGYIMLAMGIGSYRAALFHLI, ALLFLGSGSIIHSMEPIVGYS, TTFLLGTLSLCGIPPLACFWS, WLYSPIFAIIAYSTAGLTAFY, MFSFSIFFGNEIVFPYPH, LLSVCVLGLFTLFVGFIGIPL, FVINAIFSVSIALFGIFIASF, and YLFVYLSYVSVFLVVIYYFVL.

It belongs to the complex I subunit 5 family. NDH is composed of at least 16 different subunits, 5 of which are encoded in the nucleus.

The protein localises to the plastid. The protein resides in the chloroplast thylakoid membrane. The enzyme catalyses a plastoquinone + NADH + (n+1) H(+)(in) = a plastoquinol + NAD(+) + n H(+)(out). It carries out the reaction a plastoquinone + NADPH + (n+1) H(+)(in) = a plastoquinol + NADP(+) + n H(+)(out). Its function is as follows. NDH shuttles electrons from NAD(P)H:plastoquinone, via FMN and iron-sulfur (Fe-S) centers, to quinones in the photosynthetic chain and possibly in a chloroplast respiratory chain. The immediate electron acceptor for the enzyme in this species is believed to be plastoquinone. Couples the redox reaction to proton translocation, and thus conserves the redox energy in a proton gradient. This chain is NAD(P)H-quinone oxidoreductase subunit 5, chloroplastic (ndhF), found in Piper cenocladum (Ant piper).